Here is a 307-residue protein sequence, read N- to C-terminus: Ventral anterior homeobox 2 (307 aa).

Disordered stretches follow at residues 1 to 70, 155 to 175, and 197 to 254; these read MFDQ…DKLL, RTKQ…STSE, and PPPN…PSPR. Positions 25-38 are enriched in basic and acidic residues; that stretch reads CRDRGRESKSRTEV. Residues 46–62 are compositionally biased toward low complexity; sequence SSTDTPGTSASTPTSSS. Residues 103–162 constitute a DNA-binding region (homeobox); the sequence is PKRTRTSFTAEQLYRLELEFQRCQYVVGRERTELARQLNLSETQVKVWFQNRRTKQKKDQ. The segment covering 159-170 has biased composition (basic and acidic residues); the sequence is KKDQTKDTDKRS. A compositionally biased stretch (low complexity) spans 202-249; sequence LLAHPHPGNGSLLGSPSVSTSSGVSSSTTPPGAGSGTFGLSLSSLSGT.

Belongs to the EMX homeobox family. As to expression, expressed in the anterior neural keel and later in the preoptic area, optic stalk and ventral retina.

Its subcellular location is the nucleus. Transcription factor that may function in dorsoventral specification of the forebrain. Required for closure of the choroid fissure and together with vax1 is required for optic nerve differentiation and to limit retinal development to the optic cup. The polypeptide is Ventral anterior homeobox 2 (vax2) (Danio rerio (Zebrafish)).